Here is a 673-residue protein sequence, read N- to C-terminus: Zinc finger protein 16 (673 aa).

Residues 1 to 10 show a composition bias toward basic and acidic residues; sequence MPSLRTRREE. A disordered region spans residues 1–42; that stretch reads MPSLRTRREEAEMELSAPGPSPWTPAPQARVSDAPAVTHPGS. The interval 62 to 210 is necessary for transcription activation; the sequence is YQQPDCDTRT…GVPTAESPLI (149 aa). The C2H2-type 1; degenerate zinc finger occupies 209 to 231; it reads LICNECGKTFRGNPDLIQRQIVH. The C2H2-type 2; degenerate zinc-finger motif lies at 237–259; the sequence is FMCDDCGKTFSQNSVLKNRHXSH. Lysine 253 is covalently cross-linked (Glycyl lysine isopeptide (Lys-Gly) (interchain with G-Cter in SUMO2)). C2H2-type zinc fingers lie at residues 284–306, 312–334, 340–362, 368–390, 396–418, 424–446, and 452–474; these read YTCT…QKSH, YECN…QRIH, YVCS…HRTH, FECG…QRVH, YECN…HRVH, YKCS…RRIH, and HVCN…QIIH. Positions 332 to 364 are required for nuclear localization; that stretch reads RIHSGEKPYVCSECGKAFRRSSNLIKHHRTHTG. Residues 464 to 494 form a required for nuclear localization region; the sequence is SSVLRKHQIIHTGEKPYRCSVCGKAFSHSSA. The residue at position 478 (lysine 478) is an N6-acetyllysine. 7 consecutive C2H2-type zinc fingers follow at residues 480 to 502, 508 to 530, 536 to 558, 564 to 586, 592 to 614, 620 to 642, and 648 to 670; these read YRCS…QGVH, YACH…QRVH, YECT…QRIH, HECN…QKVH, YTCV…QIIH, YKCS…QRIH, and YDCA…QLIH.

This sequence belongs to the krueppel C2H2-type zinc-finger protein family. Interacts with INCA1; the interaction inhibits INCA1 activity and induces the cell cycle process.

It is found in the nucleus. Acts as a transcriptional activator. Promotes cell proliferation by facilitating the cell cycle phase transition from the S to G2/M phase. Involved in both the hemin- and phorbol myristate acetate (PMA)-induced erythroid and megakaryocytic differentiation, respectively. Also plays a role as an inhibitor of cell apoptosis. The protein is Zinc finger protein 16 (ZNF16) of Pan paniscus (Pygmy chimpanzee).